We begin with the raw amino-acid sequence, 412 residues long: MNAEIIAVGTELLLGQIANTNAQFLSEKLASIGINVYYHTVVGDNNKRLQQAIEVAEERADMLIFTGGLGPTKDDLTKETIASSLGEELVYDENALALISDYFKRTGREFTENNKKQALVLNGANVFANDHGMAPGMGLNKNGKVYILLPGPPKEMKPMYVSYVEPFLRNFTTGENIYSRVLRFFGIGESQLEVKVQDLIDGQTNPTIAPLANDGEVTLRLTAKHQNVDEAEKLIQHVEDLILERVGEFFYGYDQEFLHYKAIELLKKKGLTLACAESLTGGLFGNQVTESAGVSSVFKGGVICYHNDVKQHVLHVPEEVLSTDGAVSKECARYLAENVKELLKADIGISFTGVAGPDASEHKEPGTVFVGLAIKDEPTVVFPLNLSGSRQQIRERSAKYGFYHLYKKLEEI.

This sequence belongs to the CinA family.

This chain is Putative competence-damage inducible protein, found in Bacillus cereus (strain ATCC 10987 / NRS 248).